The chain runs to 285 residues: NAC domain-containing protein 92 (285 aa).

An NAC domain is found at 20-170 (LPPGFRFHPT…EWVICRVFQK (151 aa)). A DNA-binding region spans residues 117 to 176 (VGMKKTLVFYKGRAPKGVKTNWVMHEYRLEGKYCIENLPQTAKNEWVICRVFQKRADGTK).

Forms homodimers. Interacts with GLK1 and GLK2. Interacts with NLA. Post-translationally, ubiquitinated by NLA. Ubiquitination of NAC92 leads to its degradation by the proteasome during leaf senescence under nitrogen deficiency. In terms of tissue distribution, mostly expressed in roots and flowers, and, to a lower extent, in shoots and leaves. Particularly expressed in old and senescing tissues.

The protein resides in the nucleus. Functionally, transcription activator that binds to DNA in promoters of target genes on a specific bipartite motif 5'-[ACG][CA]GT[AG](5-6n)[CT]AC[AG]-3'. Promotes lateral root development. Triggers the expression of senescence-associated genes during age-, salt- and dark-induced senescence through a regulatory network that may involve cross-talk with salt- and H(2)O(2)-dependent signaling pathways. Also regulates genes during seed germination. Positively regulates aging-induced cell death. Involved in age-related resistance (ARR) against Pseudomonas syringae pv. tomato and Hyaloperonospora arabidopsidis. Antagonizes GLK1 and GLK2 transcriptional activity, shifting the balance from chloroplast maintenance towards deterioration during leaf senescence. Promotes the expression of senescence-associated genes, including ENDO1/BFN1, SWEET15/SAG29 and SINA1/At3g13672, during senescence onset. The chain is NAC domain-containing protein 92 from Arabidopsis thaliana (Mouse-ear cress).